Reading from the N-terminus, the 380-residue chain is Lipid-A-disaccharide synthase (380 aa).

Belongs to the LpxB family.

The catalysed reaction is a lipid X + a UDP-2-N,3-O-bis[(3R)-3-hydroxyacyl]-alpha-D-glucosamine = a lipid A disaccharide + UDP + H(+). It participates in bacterial outer membrane biogenesis; LPS lipid A biosynthesis. Functionally, condensation of UDP-2,3-diacylglucosamine and 2,3-diacylglucosamine-1-phosphate to form lipid A disaccharide, a precursor of lipid A, a phosphorylated glycolipid that anchors the lipopolysaccharide to the outer membrane of the cell. This chain is Lipid-A-disaccharide synthase, found in Pseudomonas savastanoi pv. phaseolicola (strain 1448A / Race 6) (Pseudomonas syringae pv. phaseolicola (strain 1448A / Race 6)).